Here is a 155-residue protein sequence, read N- to C-terminus: D-aminoacyl-tRNA deacylase (155 aa).

The Gly-cisPro motif, important for rejection of L-amino acids motif lies at 137 to 138 (GP).

Belongs to the DTD family. In terms of assembly, homodimer.

The protein localises to the cytoplasm. It carries out the reaction glycyl-tRNA(Ala) + H2O = tRNA(Ala) + glycine + H(+). It catalyses the reaction a D-aminoacyl-tRNA + H2O = a tRNA + a D-alpha-amino acid + H(+). Its function is as follows. An aminoacyl-tRNA editing enzyme that deacylates mischarged D-aminoacyl-tRNAs. Also deacylates mischarged glycyl-tRNA(Ala), protecting cells against glycine mischarging by AlaRS. Acts via tRNA-based rather than protein-based catalysis; rejects L-amino acids rather than detecting D-amino acids in the active site. By recycling D-aminoacyl-tRNA to D-amino acids and free tRNA molecules, this enzyme counteracts the toxicity associated with the formation of D-aminoacyl-tRNA entities in vivo and helps enforce protein L-homochirality. The sequence is that of D-aminoacyl-tRNA deacylase from Roseiflexus sp. (strain RS-1).